Here is a 350-residue protein sequence, read N- to C-terminus: MEKQPQNKRRGLAPREVPPAVGLLLIMALMNTLLYLCLDHFFIAPRQSIVDPRHCPYGHFRIGQMKNCSPWLSCEELRTEVRQLKRVGEGAVKRVFLSEWKEHKVALSRLTSLEMKDDFLHGLQMLKSLQGAHVVTLLGYCEDDNTILTEYHPLGSLSNLEETLNLSKYQNVNTWQHRLQLAMDYVSIINYLHHSPMGTRVMCDSNDLPKTLSQYLLTSNFSILANDLDALPLVNHSSGTLVKCGHRELHGDFVAPEQLWPYGEDMPFRDNLMPSYDEKIDIWKIPDISSFLLGHIEGSDMVRFHLFDIHKACKSQTPSERPTAQDVLETYQKVLDTLRDAVMSQAREML.

Methionine 1 bears the N-acetylmethionine mark. Residues 1–20 (MEKQPQNKRRGLAPREVPPA) are Cytoplasmic-facing. A helical; Signal-anchor for type II membrane protein membrane pass occupies residues 21 to 43 (VGLLLIMALMNTLLYLCLDHFFI). Residues 44–350 (APRQSIVDPR…AVMSQAREML (307 aa)) lie on the Lumenal side of the membrane. The Protein kinase domain occupies 81 to 350 (VRQLKRVGEG…AVMSQAREML (270 aa)). N-linked (GlcNAc...) asparagine glycosylation is found at asparagine 165, asparagine 220, and asparagine 235.

This sequence belongs to the protein kinase superfamily. Ser/Thr protein kinase family. STKL subfamily.

It localises to the endoplasmic reticulum membrane. It carries out the reaction 3-O-[beta-D-GalNAc-(1-&gt;3)-beta-D-GlcNAc-(1-&gt;4)-alpha-D-Man]-L-Thr-[protein] + ATP = 3-O-[beta-D-GalNAc-(1-&gt;3)-beta-D-GlcNAc-(1-&gt;4)-(O-6-P-alpha-D-Man)]-Thr-[protein] + ADP + H(+). Functionally, protein O-mannose kinase that specifically mediates phosphorylation at the 6-position of an O-mannose of the trisaccharide (N-acetylgalactosamine (GalNAc)-beta-1,3-N-acetylglucosamine (GlcNAc)-beta-1,4-mannose) to generate phosphorylated O-mannosyl trisaccharide (N-acetylgalactosamine-beta-1,3-N-acetylglucosamine-beta-1,4-(phosphate-6-)mannose). Phosphorylated O-mannosyl trisaccharide is a carbohydrate structure present in alpha-dystroglycan (DAG1), which is required for binding laminin G-like domain-containing extracellular proteins with high affinity. Only shows kinase activity when the GalNAc-beta-3-GlcNAc-beta-terminus is linked to the 4-position of O-mannose, suggesting that this disaccharide serves as the substrate recognition motif. The sequence is that of Protein O-mannose kinase (POMK) from Macaca fascicularis (Crab-eating macaque).